The following is a 353-amino-acid chain: Phosphate acyltransferase (353 aa).

This sequence belongs to the PlsX family. As to quaternary structure, homodimer. Probably interacts with PlsY.

The protein localises to the cytoplasm. It catalyses the reaction a fatty acyl-[ACP] + phosphate = an acyl phosphate + holo-[ACP]. Its pathway is lipid metabolism; phospholipid metabolism. Functionally, catalyzes the reversible formation of acyl-phosphate (acyl-PO(4)) from acyl-[acyl-carrier-protein] (acyl-ACP). This enzyme utilizes acyl-ACP as fatty acyl donor, but not acyl-CoA. This Syntrophobacter fumaroxidans (strain DSM 10017 / MPOB) protein is Phosphate acyltransferase.